Here is a 673-residue protein sequence, read N- to C-terminus: MNRSANPEAASSTSHVKFDLGKSVDISSTDTKDGGTARSPLEPADKSDTTESKSESGSDSRSEEDKESPASIKEIKAETPQPKDRPGVQIKLSWSQKIKSWTAKKKRKLYQLVIDIIMMNRVCKMFRQGLRGFREYQIIEPVHKKHPDFSFWDKKKQGRISFVTEDFAAQEGHFPPRAISITQKKPSWRTHQEIQDLCNILQALDCYRSYTESLQLLLAKVIRFERFGRRRVIVKKGQMGNSFYFIYLGTVAITEDEDGSSAFLDPHPTLLHRGGSFGEMGLLSTTVRSATVVCMEETEFLVVDREDFVANKLGDEVQKETQYRYNFFRNLDIFQSWSEEKLWKLVALGRIERFSYGQMVSKDFMNSAFITFICQGNCEILRLVALGDCSAYYKWVWQQLELLDHKPLRIHDNEISPKERFKELQIKSYPLQDFTYLKLLRLQKAREQQGIDFHGKINKVENTLPKLLGPKIKSRFGHLVKCSMVNTKFGELPKEAIVGVYMKIHKTEEGEIVGLHQAFVPEIQRDCRPFILLSLGSELIQVRKEKFYDMVDEETRAKIIKMDVDYPSDEDLCQSFLKENDYIVFRKDLLRLLVEPLNKSPFIPVQTKKKEIYNHKSLFLDLCSLEKKVKQHYPIFLAPQKYLPPLRVVQAISAPRHKIQELLPQYKNAGVLI.

Over residues 1-15 the composition is skewed to polar residues; the sequence is MNRSANPEAASSTSH. Residues 1–89 form a disordered region; it reads MNRSANPEAA…PQPKDRPGVQ (89 aa). Over residues 43-86 the composition is skewed to basic and acidic residues; sequence PADKSDTTESKSESGSDSRSEEDKESPASIKEIKAETPQPKDRP. Position 206–329 (206–329) interacts with a nucleoside 3',5'-cyclic phosphate; it reads CYRSYTESLQ…ETQYRYNFFR (124 aa).

Testis-specific. Exclusively expressed in testicular germ cells while it is not present in mature sperm (at protein level).

The protein localises to the cytoplasm. It is found in the cytosol. Essential for male fertility. Plays an important role in spermatogenesis and regulates sperm motility by controlling the development of the flagellar bending of sperm. This Mus musculus (Mouse) protein is Cyclic nucleotide-binding domain-containing protein 2 (Cnbd2).